The chain runs to 304 residues: Ribosomal RNA small subunit methyltransferase H (304 aa).

Residues 37–39, D57, F85, D100, and H107 each bind S-adenosyl-L-methionine; that span reads GGH.

It belongs to the methyltransferase superfamily. RsmH family.

Its subcellular location is the cytoplasm. It catalyses the reaction cytidine(1402) in 16S rRNA + S-adenosyl-L-methionine = N(4)-methylcytidine(1402) in 16S rRNA + S-adenosyl-L-homocysteine + H(+). In terms of biological role, specifically methylates the N4 position of cytidine in position 1402 (C1402) of 16S rRNA. This is Ribosomal RNA small subunit methyltransferase H from Azobacteroides pseudotrichonymphae genomovar. CFP2.